The primary structure comprises 587 residues: 2-succinyl-5-enolpyruvyl-6-hydroxy-3-cyclohexene-1-carboxylate synthase (587 aa).

It belongs to the TPP enzyme family. MenD subfamily. In terms of assembly, homodimer. Requires Mg(2+) as cofactor. It depends on Mn(2+) as a cofactor. Thiamine diphosphate serves as cofactor.

The catalysed reaction is isochorismate + 2-oxoglutarate + H(+) = 5-enolpyruvoyl-6-hydroxy-2-succinyl-cyclohex-3-ene-1-carboxylate + CO2. It participates in quinol/quinone metabolism; 1,4-dihydroxy-2-naphthoate biosynthesis; 1,4-dihydroxy-2-naphthoate from chorismate: step 2/7. It functions in the pathway quinol/quinone metabolism; menaquinone biosynthesis. Functionally, catalyzes the thiamine diphosphate-dependent decarboxylation of 2-oxoglutarate and the subsequent addition of the resulting succinic semialdehyde-thiamine pyrophosphate anion to isochorismate to yield 2-succinyl-5-enolpyruvyl-6-hydroxy-3-cyclohexene-1-carboxylate (SEPHCHC). This chain is 2-succinyl-5-enolpyruvyl-6-hydroxy-3-cyclohexene-1-carboxylate synthase, found in Chloroflexus aurantiacus (strain ATCC 29366 / DSM 635 / J-10-fl).